Here is a 130-residue protein sequence, read N- to C-terminus: Small ribosomal subunit protein uS11c (130 aa).

Belongs to the universal ribosomal protein uS11 family. Part of the 30S ribosomal subunit.

It localises to the plastid. It is found in the chloroplast. The polypeptide is Small ribosomal subunit protein uS11c (Zygnema circumcarinatum (Green alga)).